A 174-amino-acid polypeptide reads, in one-letter code: Adipose-secreted signaling protein (174 aa).

Belongs to the ADISSP family.

It is found in the secreted. In terms of biological role, may be involved in thermogenesis and glucose homeostasis. This chain is Adipose-secreted signaling protein, found in Xenopus tropicalis (Western clawed frog).